We begin with the raw amino-acid sequence, 132 residues long: D-ribose pyranase (132 aa).

Catalysis depends on His-20, which acts as the Proton donor. Substrate-binding positions include Asp-28, His-99, and 121–123 (YSN).

This sequence belongs to the RbsD / FucU family. RbsD subfamily. Homodecamer.

It localises to the cytoplasm. The catalysed reaction is beta-D-ribopyranose = beta-D-ribofuranose. It participates in carbohydrate metabolism; D-ribose degradation; D-ribose 5-phosphate from beta-D-ribopyranose: step 1/2. Catalyzes the interconversion of beta-pyran and beta-furan forms of D-ribose. The polypeptide is D-ribose pyranase (Streptococcus agalactiae serotype Ia (strain ATCC 27591 / A909 / CDC SS700)).